A 420-amino-acid chain; its full sequence is Serine hydroxymethyltransferase (420 aa).

(6S)-5,6,7,8-tetrahydrofolate contacts are provided by residues leucine 117 and glycine 121–leucine 123. Lysine 226 bears the N6-(pyridoxal phosphate)lysine mark.

Belongs to the SHMT family. As to quaternary structure, homodimer. It depends on pyridoxal 5'-phosphate as a cofactor.

The protein localises to the cytoplasm. The enzyme catalyses (6R)-5,10-methylene-5,6,7,8-tetrahydrofolate + glycine + H2O = (6S)-5,6,7,8-tetrahydrofolate + L-serine. Its pathway is one-carbon metabolism; tetrahydrofolate interconversion. It functions in the pathway amino-acid biosynthesis; glycine biosynthesis; glycine from L-serine: step 1/1. In terms of biological role, catalyzes the reversible interconversion of serine and glycine with tetrahydrofolate (THF) serving as the one-carbon carrier. This reaction serves as the major source of one-carbon groups required for the biosynthesis of purines, thymidylate, methionine, and other important biomolecules. Also exhibits THF-independent aldolase activity toward beta-hydroxyamino acids, producing glycine and aldehydes, via a retro-aldol mechanism. In Rhodopirellula baltica (strain DSM 10527 / NCIMB 13988 / SH1), this protein is Serine hydroxymethyltransferase.